Here is a 388-residue protein sequence, read N- to C-terminus: Chalcone synthase LF3 (388 aa).

Residue Cys-164 is part of the active site.

This sequence belongs to the thiolase-like superfamily. Chalcone/stilbene synthases family.

It carries out the reaction (E)-4-coumaroyl-CoA + 3 malonyl-CoA + 3 H(+) = 2',4,4',6'-tetrahydroxychalcone + 3 CO2 + 4 CoA. It functions in the pathway secondary metabolite biosynthesis; flavonoid biosynthesis. Functionally, the primary product of this enzyme is 4,2',4',6'-tetrahydroxychalcone (also termed naringenin-chalcone or chalcone) which can under specific conditions spontaneously isomerize into naringenin. The protein is Chalcone synthase LF3 (CHS-LF3) of Ipomoea batatas (Sweet potato).